The primary structure comprises 183 residues: Ribonuclease H (183 aa).

The region spanning 2 to 151 is the RNase H type-1 domain; that stretch reads SQARFIAFSD…VDQLAQAAAR (150 aa). D11, E57, D79, and D143 together coordinate Mg(2+).

Belongs to the RNase H family. As to quaternary structure, monomer. Mg(2+) serves as cofactor.

Its subcellular location is the cytoplasm. It catalyses the reaction Endonucleolytic cleavage to 5'-phosphomonoester.. Functionally, endonuclease that specifically degrades the RNA of RNA-DNA hybrids. The protein is Ribonuclease H of Anaeromyxobacter dehalogenans (strain 2CP-1 / ATCC BAA-258).